A 158-amino-acid chain; its full sequence is MYILTDKVATELKKPFGKVYKELNSIEGKVISIGDVTTKHLLSNGIVPDLSILDFKTKRNVPVEIPHKFKTVFEVYNPPGYISDEAIERIKYLSTIDDRDMALIVKGEEDLLTLPVIKYFPEDTSVIYGQPDEGMVVLKITKELKQKIEKLLKDMEER.

D35, V36, D54, K56, E109, and D132 together coordinate GTP.

This sequence belongs to the GTP-dependent DPCK family.

It carries out the reaction 3'-dephospho-CoA + GTP = GDP + CoA + H(+). The protein operates within cofactor biosynthesis; coenzyme A biosynthesis. Functionally, catalyzes the GTP-dependent phosphorylation of the 3'-hydroxyl group of dephosphocoenzyme A to form coenzyme A (CoA). The sequence is that of GTP-dependent dephospho-CoA kinase from Methanococcus vannielii (strain ATCC 35089 / DSM 1224 / JCM 13029 / OCM 148 / SB).